Reading from the N-terminus, the 202-residue chain is LexA repressor (202 aa).

Positions 28–48 (RAEIAQRLGFRSPNAAEEHLK) form a DNA-binding region, H-T-H motif. Catalysis depends on for autocatalytic cleavage activity residues serine 119 and lysine 156.

This sequence belongs to the peptidase S24 family. Homodimer.

The enzyme catalyses Hydrolysis of Ala-|-Gly bond in repressor LexA.. In terms of biological role, represses a number of genes involved in the response to DNA damage (SOS response), including recA and lexA. Binds to the 16 bp palindromic sequence 5'-CTGTATATATATACAG-3'. In the presence of single-stranded DNA, RecA interacts with LexA causing an autocatalytic cleavage which disrupts the DNA-binding part of LexA, leading to derepression of the SOS regulon and eventually DNA repair. The chain is LexA repressor from Klebsiella pneumoniae subsp. pneumoniae (strain ATCC 700721 / MGH 78578).